A 398-amino-acid chain; its full sequence is tRNA(Ile)-lysidine synthase (398 aa).

25–30 (SGGVDS) contributes to the ATP binding site.

It belongs to the tRNA(Ile)-lysidine synthase family.

Its subcellular location is the cytoplasm. The enzyme catalyses cytidine(34) in tRNA(Ile2) + L-lysine + ATP = lysidine(34) in tRNA(Ile2) + AMP + diphosphate + H(+). Ligates lysine onto the cytidine present at position 34 of the AUA codon-specific tRNA(Ile) that contains the anticodon CAU, in an ATP-dependent manner. Cytidine is converted to lysidine, thus changing the amino acid specificity of the tRNA from methionine to isoleucine. The polypeptide is tRNA(Ile)-lysidine synthase (Francisella tularensis subsp. holarctica (strain OSU18)).